Consider the following 156-residue polypeptide: 6,7-dimethyl-8-ribityllumazine synthase (156 aa).

Residues F22, 57-59, and 81-83 contribute to the 5-amino-6-(D-ribitylamino)uracil site; these read AVE and CVI. 86-87 contributes to the (2S)-2-hydroxy-3-oxobutyl phosphate binding site; it reads GT. Residue H89 is the Proton donor of the active site. F114 provides a ligand contact to 5-amino-6-(D-ribitylamino)uracil. R128 contacts (2S)-2-hydroxy-3-oxobutyl phosphate.

The protein belongs to the DMRL synthase family. As to quaternary structure, forms an icosahedral capsid composed of 60 subunits, arranged as a dodecamer of pentamers.

The catalysed reaction is (2S)-2-hydroxy-3-oxobutyl phosphate + 5-amino-6-(D-ribitylamino)uracil = 6,7-dimethyl-8-(1-D-ribityl)lumazine + phosphate + 2 H2O + H(+). The protein operates within cofactor biosynthesis; riboflavin biosynthesis; riboflavin from 2-hydroxy-3-oxobutyl phosphate and 5-amino-6-(D-ribitylamino)uracil: step 1/2. In terms of biological role, catalyzes the formation of 6,7-dimethyl-8-ribityllumazine by condensation of 5-amino-6-(D-ribitylamino)uracil with 3,4-dihydroxy-2-butanone 4-phosphate. This is the penultimate step in the biosynthesis of riboflavin. This chain is 6,7-dimethyl-8-ribityllumazine synthase, found in Tolumonas auensis (strain DSM 9187 / NBRC 110442 / TA 4).